The following is a 294-amino-acid chain: uncharacterized protein (294 aa).

The disordered stretch occupies residues 259-294 (LNAPTPIPPPITSHAGQEEALKPQRASKGKKAKARK). The segment covering 283–294 (RASKGKKAKARK) has biased composition (basic residues).

This is an uncharacterized protein from Homo sapiens (Human).